The primary structure comprises 1585 residues: Adhesion G protein-coupled receptor B2 (1585 aa).

A signal peptide spans 1 to 32 (MENTGWMGKGHRMTPACPLLLSVILSLRLATA). Residues 33–936 (FDPAPSACSA…ELAGSPSVPL (904 aa)) are Extracellular-facing. 3 N-linked (GlcNAc...) asparagine glycosylation sites follow: asparagine 106, asparagine 191, and asparagine 192. Residues 229 to 238 (AGAGSTTTTS) are compositionally biased toward low complexity. Residues 229 to 271 (AGAGSTTTTSPGPPAAHTLSNALVPGGPAPPAEADLHSGSSND) are disordered. Residue serine 266 is glycosylated (O-linked (Xyl...) (chondroitin sulfate) serine). TSP type-1 domains are found at residues 309–362 (DPAA…ATCP), 364–417 (HGVW…AACP), 419–472 (EGQW…LECP), and 475–528 (DSKW…KRCP). 14 cysteine pairs are disulfide-bonded: cysteine 321-cysteine 355, cysteine 325-cysteine 361, cysteine 336-cysteine 345, cysteine 376-cysteine 411, cysteine 380-cysteine 416, cysteine 391-cysteine 401, cysteine 431-cysteine 466, cysteine 435-cysteine 471, cysteine 446-cysteine 456, cysteine 487-cysteine 522, cysteine 491-cysteine 527, cysteine 502-cysteine 512, cysteine 534-cysteine 569, and cysteine 557-cysteine 587. Asparagine 356 carries N-linked (GlcNAc...) asparagine glycosylation. N-linked (GlcNAc...) asparagine glycosylation is present at asparagine 437. Residues asparagine 560 and asparagine 645 are each glycosylated (N-linked (GlcNAc...) asparagine). The GAIN-B domain maps to 757–924 (DRLFLPKEVL…AVLAQPPKDL (168 aa)). Residues 767-806 (SLSSPGKPATSGAAGSPGRGRGPGTVPPGPGHSHQRLLPA) are disordered. The segment covering 769–780 (SSPGKPATSGAA) has biased composition (low complexity). N-linked (GlcNAc...) asparagine glycosylation occurs at asparagine 867. 2 cysteine pairs are disulfide-bonded: cysteine 874-cysteine 906 and cysteine 894-cysteine 908. The tract at residues 874–924 (CASWDYSRADASSGDWDTENCQTLETQAAHTRCQCQHLSTFAVLAQPPKDL) is GPS. The chain crosses the membrane as a helical span at residues 937 to 957 (VIGCAVSCMALLTLLAIYAAF). Over 958 to 965 (WRFIKSER) the chain is Cytoplasmic. A helical transmembrane segment spans residues 966-986 (SIILLNFCLSILASNILILVG). The Extracellular portion of the chain corresponds to 987-994 (QSRVLSKG). Residues 995 to 1015 (VCTMTAAFLHFFFLSSFCWVL) form a helical membrane-spanning segment. Residues 1016–1036 (TEAWQSYLAVIGRMRTRLVRK) lie on the Cytoplasmic side of the membrane. Residues 1037 to 1057 (RFLCLGWGLPALVVAVSVGFT) form a helical membrane-spanning segment. The Extracellular portion of the chain corresponds to 1058-1078 (RTKGYGTSSYCWLSLEGGLLY). Residues 1079–1099 (AFVGPAAVIVLVNMLIGIIVF) traverse the membrane as a helical segment. At 1100–1121 (NKLMARDGISDKSKKQRAGSER) the chain is on the cytoplasmic side. The helical transmembrane segment at 1122–1142 (CPWASLLLPCSACGAVPSPLL) threads the bilayer. Residues 1143 to 1153 (SSASARNAMAS) lie on the Extracellular side of the membrane. The chain crosses the membrane as a helical span at residues 1154 to 1174 (LWSSCVVLPLLALTWMSAVLA). At 1175–1585 (MTDRRSVLFQ…PPDGDFQTEV (411 aa)) the chain is on the cytoplasmic side. Position 1351 is a phosphotyrosine (tyrosine 1351). 3 disordered regions span residues 1359–1385 (LSLQPGGGGGGGEDAPRARPEGTPRRA), 1423–1454 (FQPPPPTPSARQVPEPGERSRTMPRTVPGSTM), and 1498–1585 (YRSQ…QTEV). Over residues 1372–1382 (DAPRARPEGTP) the composition is skewed to basic and acidic residues. Residues 1543–1552 (SWSTFKSMTL) are compositionally biased toward polar residues. The span at 1575-1585 (EPPDGDFQTEV) shows a compositional bias: acidic residues.

Belongs to the G-protein coupled receptor 2 family. Adhesion G-protein coupled receptor (ADGR) subfamily. Heterodimer of 2 chains generated by proteolytic processing; the large extracellular N-terminal fragment and the membrane-bound C-terminal fragment predominantly remain associated and non-covalently linked. Interacts with GABPB2. Interacts (via carboxy-terminus) with TAX1BP3. Interacts with GNAZ. Interacts with SH3GL2. Glycosylated. In terms of processing, autoproteolytically processed at the GPS region of the GAIN-B domain; this cleavage modulates receptor activity. Additionally, furin is involved in the cleavage at another site, in the middle of the extracellular domain, generating a soluble fragment. As to expression, detected in cerebrospinal fluid (at protein level). Strongly expressed in brain. Also detected in heart, thymus, skeletal muscle, and different cell lines.

It is found in the cell membrane. It localises to the secreted. With respect to regulation, receptor activity is regulated by proteolytic processing. The long N-terminal has a an inhibitory effect on the constitutive signaling activity. Removal of the N-terminal region induces an increase of the receptor activity. In terms of biological role, orphan G-protein coupled receptor involved in cell adhesion and probably in cell-cell interactions. Activates NFAT-signaling pathway, a transcription factor, via the G-protein GNAZ. Involved in angiogenesis inhibition. In Homo sapiens (Human), this protein is Adhesion G protein-coupled receptor B2.